A 241-amino-acid chain; its full sequence is Methylthioribulose-1-phosphate dehydratase (241 aa).

A compositionally biased stretch (polar residues) spans 1–11; the sequence is MSSLCDTSNGE. The segment at 1–20 is disordered; sequence MSSLCDTSNGESHADPCQDK. C96 lines the substrate pocket. Zn(2+) is bound by residues H114 and H116. The active-site Proton donor/acceptor is E138. Position 194 (H194) interacts with Zn(2+).

The protein belongs to the aldolase class II family. MtnB subfamily. Requires Zn(2+) as cofactor.

It localises to the cytoplasm. It catalyses the reaction 5-(methylsulfanyl)-D-ribulose 1-phosphate = 5-methylsulfanyl-2,3-dioxopentyl phosphate + H2O. It participates in amino-acid biosynthesis; L-methionine biosynthesis via salvage pathway; L-methionine from S-methyl-5-thio-alpha-D-ribose 1-phosphate: step 2/6. In terms of biological role, catalyzes the dehydration of methylthioribulose-1-phosphate (MTRu-1-P) into 2,3-diketo-5-methylthiopentyl-1-phosphate (DK-MTP-1-P). Functions in the methionine salvage pathway. May play a role in apoptosis. This chain is Methylthioribulose-1-phosphate dehydratase, found in Osmerus mordax (Rainbow smelt).